We begin with the raw amino-acid sequence, 239 residues long: Ribonuclease PH (239 aa).

Residues arginine 86 and 124–126 contribute to the phosphate site; that span reads GTR.

The protein belongs to the RNase PH family. In terms of assembly, homohexameric ring arranged as a trimer of dimers.

The catalysed reaction is tRNA(n+1) + phosphate = tRNA(n) + a ribonucleoside 5'-diphosphate. Its function is as follows. Phosphorolytic 3'-5' exoribonuclease that plays an important role in tRNA 3'-end maturation. Removes nucleotide residues following the 3'-CCA terminus of tRNAs; can also add nucleotides to the ends of RNA molecules by using nucleoside diphosphates as substrates, but this may not be physiologically important. Probably plays a role in initiation of 16S rRNA degradation (leading to ribosome degradation) during starvation. This Rickettsia akari (strain Hartford) protein is Ribonuclease PH.